Reading from the N-terminus, the 201-residue chain is ATP synthase subunit b 2 (201 aa).

Polar residues predominate over residues M1–T17. The disordered stretch occupies residues M1–A39. Residues T47–M66 form a helical membrane-spanning segment.

It belongs to the ATPase B chain family. As to quaternary structure, F-type ATPases have 2 components, F(1) - the catalytic core - and F(0) - the membrane proton channel. F(1) has five subunits: alpha(3), beta(3), gamma(1), delta(1), epsilon(1). F(0) has three main subunits: a(1), b(2) and c(10-14). The alpha and beta chains form an alternating ring which encloses part of the gamma chain. F(1) is attached to F(0) by a central stalk formed by the gamma and epsilon chains, while a peripheral stalk is formed by the delta and b chains.

The protein resides in the cell inner membrane. In terms of biological role, f(1)F(0) ATP synthase produces ATP from ADP in the presence of a proton or sodium gradient. F-type ATPases consist of two structural domains, F(1) containing the extramembraneous catalytic core and F(0) containing the membrane proton channel, linked together by a central stalk and a peripheral stalk. During catalysis, ATP synthesis in the catalytic domain of F(1) is coupled via a rotary mechanism of the central stalk subunits to proton translocation. Component of the F(0) channel, it forms part of the peripheral stalk, linking F(1) to F(0). The b'-subunit is a diverged and duplicated form of b found in plants and photosynthetic bacteria. The protein is ATP synthase subunit b 2 (atpF2) of Methylorubrum extorquens (strain PA1) (Methylobacterium extorquens).